A 328-amino-acid polypeptide reads, in one-letter code: GTP 3',8-cyclase (328 aa).

Positions 1–229 (MNQVDYLRIS…DAQVRGSGPA (229 aa)) constitute a Radical SAM core domain. Arginine 8 serves as a coordination point for GTP. [4Fe-4S] cluster is bound by residues cysteine 15 and cysteine 19. Tyrosine 21 contacts S-adenosyl-L-methionine. Cysteine 22 contacts [4Fe-4S] cluster. Arginine 60 contributes to the GTP binding site. Residue glycine 64 participates in S-adenosyl-L-methionine binding. Threonine 91 serves as a coordination point for GTP. Serine 115 provides a ligand contact to S-adenosyl-L-methionine. Lysine 155 provides a ligand contact to GTP. S-adenosyl-L-methionine is bound at residue methionine 189. [4Fe-4S] cluster is bound by residues cysteine 252 and cysteine 255. Position 257-259 (257-259 (RMR)) interacts with GTP. Cysteine 269 provides a ligand contact to [4Fe-4S] cluster.

Belongs to the radical SAM superfamily. MoaA family. Monomer and homodimer. [4Fe-4S] cluster serves as cofactor.

The catalysed reaction is GTP + AH2 + S-adenosyl-L-methionine = (8S)-3',8-cyclo-7,8-dihydroguanosine 5'-triphosphate + 5'-deoxyadenosine + L-methionine + A + H(+). Its pathway is cofactor biosynthesis; molybdopterin biosynthesis. In terms of biological role, catalyzes the cyclization of GTP to (8S)-3',8-cyclo-7,8-dihydroguanosine 5'-triphosphate. This Trichormus variabilis (strain ATCC 29413 / PCC 7937) (Anabaena variabilis) protein is GTP 3',8-cyclase.